Consider the following 171-residue polypeptide: Calcium channel flower homolog (171 aa).

Topologically, residues 1-31 (MSGSVAAGAAAGPVPPAQEEGMTWWYRWLCR) are cytoplasmic. A helical membrane pass occupies residues 32–52 (LAGVLGAVSCAISGLFNCVTI). Residues 53–56 (HPLN) lie on the Extracellular side of the membrane. A helical transmembrane segment spans residues 57–77 (IAAGVWMIMNAFILLLCEAPF). Over 78–101 (CCQFVEFANTVAEKVDRLRSWQKA) the chain is Cytoplasmic. The helical transmembrane segment at 102–122 (VFYCGMAIVPIVMSLTLTTLL) threads the bilayer. Residues 123–124 (GN) are Extracellular-facing. The chain crosses the membrane as a helical span at residues 125 to 141 (AIAFATGVLYGLSALGK). The Cytoplasmic segment spans residues 142-171 (KGDAISYARIQQQRQQADEEKLAETFEGEL).

Belongs to the calcium channel flower family. In terms of assembly, interacts with adaptor protein complex 2 (AP-2). As to expression, expressed in calyces in the brain (at protein level). Detected in cultured hippocampal neurons (at protein level).

Its subcellular location is the cell membrane. It is found in the cytoplasmic vesicle. The protein resides in the secretory vesicle. It localises to the synaptic vesicle. The protein localises to the golgi apparatus. Its subcellular location is the vesicle. In terms of biological role, transmembrane protein which mediates synaptic endocytosis and fitness-based cell culling. In response to different stimulus strengths, controls two major modes of synaptic vesicle (SV) retrieval in hippocampal neurons; Clathrin-mediated endocytosis (CME) in response to mild stimulation and activity-dependent bulk endocytosis (ADBE) in response to strong stimulation. In cytotoxic T-lymphoocytes (CTLs) facilitates calcium-dependent endocytosis of cytotoxic granules (CGs) at the immuno synapse. Different isoforms work as fitness fingerprints in 'loser' and 'winner' cells and thereby mediate win/lose decisions as part of the cell competition process. This chain is Calcium channel flower homolog (Cacfd1), found in Rattus norvegicus (Rat).